The sequence spans 903 residues: DNA-directed DNA polymerase (903 aa).

The segment at tyrosine 103–phenylalanine 340 is 3'-5'exonuclease. Mg(2+)-binding residues include aspartate 114, glutamate 116, and aspartate 222. Residues threonine 248–threonine 264 are beta hairpin. Aspartate 327, aspartate 411, and leucine 412 together coordinate Mg(2+). The tract at residues isoleucine 380 to phenylalanine 903 is polymerase. Substrate contacts are provided by residues serine 414–tyrosine 416, arginine 482, and lysine 560. Aspartate 623 is a binding site for Mg(2+). Residues lysine 705–tyrosine 708 form a binding of DNA in B-conformation region. The tract at residues leucine 897–phenylalanine 903 is interaction with the polymerase clamp.

It belongs to the DNA polymerase type-B family. Part of the replicase complex that includes the DNA polymerase, the polymerase clamp, the clamp loader complex, the single-stranded DNA binding protein, and the primase/helicase. Interacts with the polymerase clamp; this interaction constitutes the polymerase holoenzyme. It depends on Mg(2+) as a cofactor.

It catalyses the reaction DNA(n) + a 2'-deoxyribonucleoside 5'-triphosphate = DNA(n+1) + diphosphate. Its function is as follows. Replicates the viral genomic DNA. This polymerase possesses two enzymatic activities: DNA synthesis (polymerase) and an exonucleolytic activity that degrades single-stranded DNA in the 3'- to 5'-direction for proofreading purpose. This is DNA-directed DNA polymerase (43) from Escherichia coli (Bacteriophage RB69).